The primary structure comprises 412 residues: Yellow-related salivary protein LJM17 (412 aa).

The N-terminal stretch at 1-18 is a signal peptide; it reads MRFFFVFLAIVLFQGIHG. Residue N29 is glycosylated (N-linked (GlcNAc...) asparagine).

The protein belongs to the major royal jelly protein family. Salivary gland.

Its subcellular location is the secreted. Its function is as follows. Probably modulates blood feeding of sand flies on vertebrate species by binding and sequestering different mediators involved in the host response. Binds biogenic amines. Binds serotonin with high affinity. Binds noradrenaline but not adrenaline. Binds dopamine and octopamine. Binds histamine. Inhibits host smooth muscle contraction induced by histamine in bioassay with guinea pig ileum. Immunogenic; elicits antibody production in the host. Functions as a chemoattractant for host neutrophils; likely acts through a G-protein-coupled receptor and effect is dependent on calcium influx. This is Yellow-related salivary protein LJM17 from Lutzomyia longipalpis (Sand fly).